Here is a 341-residue protein sequence, read N- to C-terminus: Uroporphyrinogen decarboxylase (341 aa).

Substrate-binding positions include 23–27 (RQAGR), phenylalanine 42, aspartate 73, tyrosine 148, serine 203, and histidine 318.

It belongs to the uroporphyrinogen decarboxylase family. In terms of assembly, homodimer.

Its subcellular location is the cytoplasm. The enzyme catalyses uroporphyrinogen III + 4 H(+) = coproporphyrinogen III + 4 CO2. It participates in porphyrin-containing compound metabolism; protoporphyrin-IX biosynthesis; coproporphyrinogen-III from 5-aminolevulinate: step 4/4. Its function is as follows. Catalyzes the decarboxylation of four acetate groups of uroporphyrinogen-III to yield coproporphyrinogen-III. The chain is Uroporphyrinogen decarboxylase from Brucella melitensis biotype 1 (strain ATCC 23456 / CCUG 17765 / NCTC 10094 / 16M).